Reading from the N-terminus, the 137-residue chain is Histone H2B (137 aa).

Residues 1 to 10 (MPPKPADKKP) show a composition bias toward basic and acidic residues. The disordered stretch occupies residues 1-45 (MPPKPADKKPASKAPATASKAPEKKDAGKKTAASGDKKKRTKARK). Residues K8 and K9 each carry the N6-acetyllysine; alternate modification. Residues K8 and K9 each participate in a glycyl lysine isopeptide (Lys-Gly) (interchain with G-Cter in SUMO); alternate cross-link. S12 carries the post-translational modification Phosphoserine. K13 carries the post-translational modification N6-acetyllysine. An N6-acetyllysine; alternate modification is found at K24. K24 is covalently cross-linked (Glycyl lysine isopeptide (Lys-Gly) (interchain with G-Cter in SUMO); alternate). K25 is covalently cross-linked (Glycyl lysine isopeptide (Lys-Gly) (interchain with G-Cter in SUMO)). K131 is covalently cross-linked (Glycyl lysine isopeptide (Lys-Gly) (interchain with G-Cter in ubiquitin)).

This sequence belongs to the histone H2B family. In terms of assembly, the nucleosome is a histone octamer containing two molecules each of H2A, H2B, H3 and H4 assembled in one H3-H4 heterotetramer and two H2A-H2B heterodimers. The octamer wraps approximately 147 bp of DNA. Post-translationally, monoubiquitinated by the ubc-2-bre-1 complex to form H2BK123ub1. H2BK123ub1 gives a specific tag for epigenetic transcriptional activation and is also prerequisite for H3K4me and H3K79me formation. H2BK123ub1 also modulates the formation of double-strand breaks during meiosis and is a prerequisite for DNA-damage checkpoint activation. In terms of processing, phosphorylated by ste-20 to form H2BS10ph during progression through meiotic prophase. May be correlated with chromosome condensation. Acetylated by gcn-5 to form H2BK11ac and H2BK16ac. H2BK16ac can also be formed by esa-1. Acetylation of N-terminal lysines and particularly formation of H2BK11acK16ac has a positive effect on transcription. Post-translationally, sumoylation to form H2BK6su or H2BK7su, and probably also H2BK16su or H2BK17su, occurs preferentially near the telomeres and represses gene transcription.

It localises to the nucleus. The protein localises to the chromosome. Functionally, core component of nucleosome. Nucleosomes wrap and compact DNA into chromatin, limiting DNA accessibility to the cellular machineries which require DNA as a template. Histones thereby play a central role in transcription regulation, DNA repair, DNA replication and chromosomal stability. DNA accessibility is regulated via a complex set of post-translational modifications of histones, also called histone code, and nucleosome remodeling. The sequence is that of Histone H2B (hh2b) from Neurospora crassa (strain ATCC 24698 / 74-OR23-1A / CBS 708.71 / DSM 1257 / FGSC 987).